Consider the following 308-residue polypeptide: Ribonuclease Z (308 aa).

Zn(2+)-binding residues include H62, H64, D66, H67, H140, D211, and H269. The active-site Proton acceptor is the D66.

This sequence belongs to the RNase Z family. As to quaternary structure, homodimer. Requires Zn(2+) as cofactor.

The enzyme catalyses Endonucleolytic cleavage of RNA, removing extra 3' nucleotides from tRNA precursor, generating 3' termini of tRNAs. A 3'-hydroxy group is left at the tRNA terminus and a 5'-phosphoryl group is left at the trailer molecule.. In terms of biological role, zinc phosphodiesterase, which displays some tRNA 3'-processing endonuclease activity. Probably involved in tRNA maturation, by removing a 3'-trailer from precursor tRNA. This Treponema denticola (strain ATCC 35405 / DSM 14222 / CIP 103919 / JCM 8153 / KCTC 15104) protein is Ribonuclease Z.